The sequence spans 347 residues: uncharacterized protein (347 aa).

Residues 1–26 form the signal peptide; it reads MQGRVAGSCAPLGLLLVCLHLPGLFA. The segment covering 41–60 has biased composition (polar residues); that stretch reads GTNLPQLGQPSSTGPSNSEH. 2 disordered regions span residues 41-110 and 148-189; these read GTNL…MDSW and SGPL…AGGK. A compositionally biased stretch (low complexity) spans 148 to 157; sequence SGPLPGESSP.

In terms of assembly, binds to numerous extracellular matrix proteins.

It is found in the secreted. It localises to the extracellular space. The protein localises to the extracellular matrix. This is an uncharacterized protein from Pan troglodytes (Chimpanzee).